Here is a 247-residue protein sequence, read N- to C-terminus: uncharacterized protein (247 aa).

This is an uncharacterized protein from Archaeoglobus fulgidus (strain ATCC 49558 / DSM 4304 / JCM 9628 / NBRC 100126 / VC-16).